A 453-amino-acid chain; its full sequence is SH2 domain-containing protein 4A (453 aa).

A coiled-coil region spans residues Glu96 to Leu127. A disordered region spans residues Ala280–Ile301. Residues Pro284–Pro293 show a composition bias toward pro residues. An SH2 domain is found at Trp347 to Cys439.

The protein resides in the cytoplasm. Functionally, inhibits estrogen-induced cell proliferation. In Xenopus tropicalis (Western clawed frog), this protein is SH2 domain-containing protein 4A (sh2d4a).